A 305-amino-acid chain; its full sequence is NAD kinase (305 aa).

D84 serves as the catalytic Proton acceptor. Residues 84 to 85 (DG), 159 to 160 (NE), H170, R187, D189, 200 to 205 (TAYSLS), and Q260 each bind NAD(+).

This sequence belongs to the NAD kinase family. The cofactor is a divalent metal cation.

The protein resides in the cytoplasm. The enzyme catalyses NAD(+) + ATP = ADP + NADP(+) + H(+). Functionally, involved in the regulation of the intracellular balance of NAD and NADP, and is a key enzyme in the biosynthesis of NADP. Catalyzes specifically the phosphorylation on 2'-hydroxyl of the adenosine moiety of NAD to yield NADP. The polypeptide is NAD kinase (Pasteurella multocida (strain Pm70)).